A 525-amino-acid chain; its full sequence is Serine/threonine protein phosphatase 2A 55 kDa regulatory subunit B beta isoform (525 aa).

The interval 1-30 is disordered; the sequence is MDPSSKSPDDDDLRPEAEAARRPQPQPQPR. 2 WD repeats span residues 48–87 and 124–165; these read QEVD…DSAS and EIEE…VKRI. A disordered region spans residues 169–191; sequence NLNTSQSSGNGTTSSSSSSSSRA. Positions 171–189 are enriched in low complexity; that stretch reads NTSQSSGNGTTSSSSSSSS. 4 WD repeats span residues 244-282, 293-333, 352-390, and 495-525; these read AHDY…QSFN, DLTE…LCDN, EIIA…GPVA, and DLST…MYYA.

This sequence belongs to the phosphatase 2A regulatory subunit B family. In terms of assembly, PP2A consists of a common heteromeric enzyme, composed of a catalytic subunit (subunits C), a constant regulatory subunit (subunit A), and a variety of regulatory subunits such as subunits B (the R2/B/PR55/B55, R3/B''/PR72/PR130/PR59 and R5/B'/B56 families).

Functionally, the B regulatory subunit may modulate substrate selectivity and catalytic activity, and may also direct the localization of the catalytic enzyme to a particular subcellular compartment. The sequence is that of Serine/threonine protein phosphatase 2A 55 kDa regulatory subunit B beta isoform from Oryza sativa subsp. japonica (Rice).